We begin with the raw amino-acid sequence, 498 residues long: ATP synthase subunit beta, chloroplastic (498 aa).

ATP is bound at residue 172 to 179; it reads GGAGVGKT.

This sequence belongs to the ATPase alpha/beta chains family. In terms of assembly, F-type ATPases have 2 components, CF(1) - the catalytic core - and CF(0) - the membrane proton channel. CF(1) has five subunits: alpha(3), beta(3), gamma(1), delta(1), epsilon(1). CF(0) has four main subunits: a(1), b(1), b'(1) and c(9-12).

Its subcellular location is the plastid. The protein localises to the chloroplast thylakoid membrane. The catalysed reaction is ATP + H2O + 4 H(+)(in) = ADP + phosphate + 5 H(+)(out). Functionally, produces ATP from ADP in the presence of a proton gradient across the membrane. The catalytic sites are hosted primarily by the beta subunits. The sequence is that of ATP synthase subunit beta, chloroplastic from Lolium perenne (Perennial ryegrass).